We begin with the raw amino-acid sequence, 603 residues long: Elongation factor 4 (603 aa).

The 185-residue stretch at 7 to 191 folds into the tr-type G domain; the sequence is DNIRNFSIVA…AIVTRLPPPK (185 aa). GTP-binding positions include 19 to 24 and 138 to 141; these read DHGKST and NKVD.

This sequence belongs to the TRAFAC class translation factor GTPase superfamily. Classic translation factor GTPase family. LepA subfamily.

It is found in the cell inner membrane. It catalyses the reaction GTP + H2O = GDP + phosphate + H(+). Required for accurate and efficient protein synthesis under certain stress conditions. May act as a fidelity factor of the translation reaction, by catalyzing a one-codon backward translocation of tRNAs on improperly translocated ribosomes. Back-translocation proceeds from a post-translocation (POST) complex to a pre-translocation (PRE) complex, thus giving elongation factor G a second chance to translocate the tRNAs correctly. Binds to ribosomes in a GTP-dependent manner. The sequence is that of Elongation factor 4 from Rhodopseudomonas palustris (strain ATCC BAA-98 / CGA009).